The primary structure comprises 621 residues: UvrABC system protein C (621 aa).

The region spanning 21 to 100 (AEPGVYLMRD…IKTYQPPYNV (80 aa)) is the GIY-YIG domain. The 36-residue stretch at 210–245 (DELIRELKEKMAQAAQQENYEAAARYRDQIRGLEQL) folds into the UVR domain.

This sequence belongs to the UvrC family. As to quaternary structure, interacts with UvrB in an incision complex.

Its subcellular location is the cytoplasm. Functionally, the UvrABC repair system catalyzes the recognition and processing of DNA lesions. UvrC both incises the 5' and 3' sides of the lesion. The N-terminal half is responsible for the 3' incision and the C-terminal half is responsible for the 5' incision. The sequence is that of UvrABC system protein C from Synechococcus sp. (strain JA-3-3Ab) (Cyanobacteria bacterium Yellowstone A-Prime).